Reading from the N-terminus, the 612-residue chain is MITFRGDGLYNSKFDDIYFNTNEPLIECEHTYSSVLDEINAKFIVVAEAGFGTGLNFFSTVLKFLSLNSTELHYIAVEKYPFKKSELREIYLKFEILKPFFDEFIEQYEILDGALIRIKLLNERVILDLYFGDILDAFDELSFRADAWYLDGFSPTKNPDMWSKEVFDRLSKFCKNRAKVRTFSSAKIVQNRFLEHGFSIKKLKGHYKKREILEASLEHSSPKILKEPWYALPNISKFSDVLIIGAGVAGLAAAFKFKKAGFNVCIAEKMSEAATNGSSNLAGILMPLITKPKVALGNMHMSAFLFARHFYANSPFADFCGVYDYGVNDLEKTRLSLWDSEIFKFENDFEPYPRAFIKSAAQIRPKELCMSLASEFDIKYGYEFESIEKSTGGYVVKFKNSKNIFSSLVIFAMGDVSTNLFQNVFADEFMQLSSVRGQVTHLNKVLNLNSAFSARGYMCKDVRGIQVVGATYDRNDNRSAARATDDEKNIDSLSEFITNLDVKVVGSNVGFRGYSGDRFPIVGAVHNASEFKKIYKSLLWTKHSKNNEFAVHHENILISSAHGSRGLGTAIFGAEILLDIALNRPVCTTNSILNSLNPARFLVRKLKRGLVR.

The segment at 1 to 218 (MITFRGDGLY…KREILEASLE (218 aa)) is tRNA (mnm(5)s(2)U34)-methyltransferase. The interval 244 to 612 (IGAGVAGLAA…VRKLKRGLVR (369 aa)) is FAD-dependent cmnm(5)s(2)U34 oxidoreductase.

In the N-terminal section; belongs to the methyltransferase superfamily. tRNA (mnm(5)s(2)U34)-methyltransferase family. The protein in the C-terminal section; belongs to the DAO family. FAD is required as a cofactor.

The protein resides in the cytoplasm. It carries out the reaction 5-aminomethyl-2-thiouridine(34) in tRNA + S-adenosyl-L-methionine = 5-methylaminomethyl-2-thiouridine(34) in tRNA + S-adenosyl-L-homocysteine + H(+). In terms of biological role, catalyzes the last two steps in the biosynthesis of 5-methylaminomethyl-2-thiouridine (mnm(5)s(2)U) at the wobble position (U34) in tRNA. Catalyzes the FAD-dependent demodification of cmnm(5)s(2)U34 to nm(5)s(2)U34, followed by the transfer of a methyl group from S-adenosyl-L-methionine to nm(5)s(2)U34, to form mnm(5)s(2)U34. The chain is tRNA 5-methylaminomethyl-2-thiouridine biosynthesis bifunctional protein MnmC from Campylobacter fetus subsp. fetus (strain 82-40).